The chain runs to 583 residues: Estrogen receptor (583 aa).

The segment at 1–138 is modulating; sequence MYPEESRGSG…GFEITKNTRF (138 aa). NR C4-type zinc fingers lie at residues 139–159 and 175–199; these read CAVC…CEGC and CPAT…LRKC. A DNA-binding region (nuclear receptor) is located at residues 139 to 204; that stretch reads CAVCSDYASG…RLRKCYEVGM (66 aa). Positions 205 to 265 are hinge; it reads MKGGMRKDRG…PGGRSSLNNM (61 aa). A disordered region spans residues 220-263; the sequence is EKHGPAQRQTSQNLPTHKASPQDGRKRAMSSSSTSGPGGRSSLN. The NR LBD domain occupies 266–501; sequence PPDQVLLLLQ…DLLLEMLDAH (236 aa). The disordered stretch occupies residues 506–583; sequence PVKPSQSWSQ…GSHSDCTRIP (78 aa). Over residues 539–551 the composition is skewed to low complexity; sequence ASSAGSSSGPQGS.

The protein belongs to the nuclear hormone receptor family. NR3 subfamily. In terms of assembly, binds DNA as a homodimer. Can form a heterodimer with ER-beta.

The protein resides in the nucleus. In terms of biological role, the steroid hormones and their receptors are involved in the regulation of eukaryotic gene expression and affect cellular proliferation and differentiation in target tissues. The sequence is that of Estrogen receptor (esr1) from Oreochromis aureus (Israeli tilapia).